The following is a 181-amino-acid chain: 3-hydroxyanthranilate 3,4-dioxygenase (181 aa).

Residue R46 participates in O2 binding. Fe cation-binding residues include H50, E56, and H95. Position 56 (E56) interacts with substrate. R99 and E109 together coordinate substrate.

Belongs to the 3-HAO family. Fe(2+) serves as cofactor.

The protein resides in the cytoplasm. The catalysed reaction is 3-hydroxyanthranilate + O2 = (2Z,4Z)-2-amino-3-carboxymuconate 6-semialdehyde. It functions in the pathway cofactor biosynthesis; NAD(+) biosynthesis; quinolinate from L-kynurenine: step 3/3. In terms of biological role, catalyzes the oxidative ring opening of 3-hydroxyanthranilate to 2-amino-3-carboxymuconate semialdehyde, which spontaneously cyclizes to quinolinate. The chain is 3-hydroxyanthranilate 3,4-dioxygenase from Mycosarcoma maydis (Corn smut fungus).